Here is a 659-residue protein sequence, read N- to C-terminus: DNA ligase (659 aa).

NAD(+) contacts are provided by residues Asp-31 to Asp-35, Ser-80 to Leu-81, and Glu-109. Lys-111 (N6-AMP-lysine intermediate) is an active-site residue. Residues Arg-132, Glu-166, Lys-281, and Lys-305 each contribute to the NAD(+) site. Zn(2+) is bound by residues Cys-398, Cys-401, Cys-416, and Cys-421. The BRCT domain maps to Val-581–Glu-659.

Belongs to the NAD-dependent DNA ligase family. LigA subfamily. Mg(2+) is required as a cofactor. The cofactor is Mn(2+).

The enzyme catalyses NAD(+) + (deoxyribonucleotide)n-3'-hydroxyl + 5'-phospho-(deoxyribonucleotide)m = (deoxyribonucleotide)n+m + AMP + beta-nicotinamide D-nucleotide.. DNA ligase that catalyzes the formation of phosphodiester linkages between 5'-phosphoryl and 3'-hydroxyl groups in double-stranded DNA using NAD as a coenzyme and as the energy source for the reaction. It is essential for DNA replication and repair of damaged DNA. This Acholeplasma laidlawii (strain PG-8A) protein is DNA ligase.